The sequence spans 79 residues: Sulfur carrier protein TusA (79 aa).

Cys15 serves as the catalytic Cysteine persulfide intermediate.

This sequence belongs to the sulfur carrier protein TusA family. Interacts with IscS.

The protein resides in the cytoplasm. Its pathway is tRNA modification. Its function is as follows. Sulfur carrier protein involved in sulfur trafficking in the cell. Part of a sulfur-relay system required for 2-thiolation during synthesis of 2-thiouridine of the modified wobble base 5-methylaminomethyl-2-thiouridine (mnm(5)s(2)U) in tRNA. Interacts with IscS and stimulates its cysteine desulfurase activity. Accepts an activated sulfur from IscS, which is then transferred to TusD, and thus determines the direction of sulfur flow from IscS to 2-thiouridine formation. Also appears to be involved in sulfur transfer for the biosynthesis of molybdopterin. In Buchnera aphidicola subsp. Baizongia pistaciae (strain Bp), this protein is Sulfur carrier protein TusA.